The primary structure comprises 585 residues: Arginine--tRNA ligase (585 aa).

The 'HIGH' region motif lies at 131–141 (ANPTGPMHVGH).

The protein belongs to the class-I aminoacyl-tRNA synthetase family. As to quaternary structure, monomer.

The protein localises to the cytoplasm. It carries out the reaction tRNA(Arg) + L-arginine + ATP = L-arginyl-tRNA(Arg) + AMP + diphosphate. In Sinorhizobium medicae (strain WSM419) (Ensifer medicae), this protein is Arginine--tRNA ligase.